Reading from the N-terminus, the 507-residue chain is Phosphoprotein (507 aa).

Residues Ser-86 and Ser-151 each carry the phosphoserine modification. The segment covering 137-160 has biased composition (acidic residues); it reads DGVEVWGGDEESENSDVDSGEPDP. The tract at residues 137–307 is disordered; that stretch reads DGVEVWGGDE…QSNIEPEDDY (171 aa). 2 stretches are compositionally biased toward basic and acidic residues: residues 189 to 199 and 222 to 233; these read EIQKLLEDQSR and TASEKPIKKGTD. Composition is skewed to low complexity over residues 236–252 and 266–278; these read STSSGTMAESSSTGGAT and NASAENALASASN. The segment covering 279-301 has biased composition (polar residues); sequence VSPTQGSKTESGTTTSRISQSNI. The tract at residues 304 to 376 is multimerization; it reads EDDYDDELFS…LSSVMIAIPG (73 aa). Positions 459-507 are interaction with the nucleocapsid (N-RNA); the sequence is ASRSVIRSIIKSSHLGEDRKDYLMSLLNDIQGSKDLAQFHQMLVKILKN.

Belongs to the morbillivirus P protein family. Homotetramer. Interacts (via multimerization domain) with polymerase L; this interaction forms the polymerase L-P complex. Interacts (via N-terminus) with N0 (via Ncore); this interaction allows P to chaperon N0 to avoid N polymerization before encapsidation. Interacts (via C-terminus) with N-RNA template; this interaction positions the polymerase on the template for both transcription and replication. Post-translationally, phosphorylation on serines by host CK2 is necessary for the formation of viral factories.

Essential cofactor of the RNA polymerase L that plays a central role in the transcription and replication by forming the polymerase complex with RNA polymerase L and recruiting L to the genomic N-RNA template for RNA synthesis. Also plays a central role in the encapsidation of nascent RNA chains by forming the encapsidation complex with the nucleocapsid protein N (N-P complex). Acts as a chaperone for newly synthesized free N protein, so-called N0, allowing encapsidation of nascent RNA chains during replication. The nucleoprotein protein N prevents excessive phosphorylation of P, which leads to down-regulation of viral transcription/ replication. Participates, together with N, in the formation of viral factories (viroplasms), which are large inclusions in the host cytoplasm where replication takes place. This Bos indicus (Zebu) protein is Phosphoprotein (P/V).